Consider the following 200-residue polypeptide: Recombination protein RecR (200 aa).

The C4-type zinc-finger motif lies at 60 to 75 (CVYCQALTEDDVCNIC). The Toprim domain occupies 83 to 177 (TKLCIIESML…KISRIGFGVP (95 aa)).

It belongs to the RecR family.

Its function is as follows. May play a role in DNA repair. It seems to be involved in an RecBC-independent recombinational process of DNA repair. It may act with RecF and RecO. The chain is Recombination protein RecR from Francisella tularensis subsp. mediasiatica (strain FSC147).